The following is a 138-amino-acid chain: Sec-independent protein translocase protein TatB (138 aa).

A helical transmembrane segment spans residues 1 to 21 (MFDIGFSELLLIAVVALVVLG). Positions 116–138 (VHHVHVPPPSTSTHGNNGQEKSQ) are disordered. The segment covering 126-138 (TSTHGNNGQEKSQ) has biased composition (polar residues).

The protein belongs to the TatB family. As to quaternary structure, the Tat system comprises two distinct complexes: a TatABC complex, containing multiple copies of TatA, TatB and TatC subunits, and a separate TatA complex, containing only TatA subunits. Substrates initially bind to the TatABC complex, which probably triggers association of the separate TatA complex to form the active translocon.

The protein resides in the cell inner membrane. Functionally, part of the twin-arginine translocation (Tat) system that transports large folded proteins containing a characteristic twin-arginine motif in their signal peptide across membranes. Together with TatC, TatB is part of a receptor directly interacting with Tat signal peptides. TatB may form an oligomeric binding site that transiently accommodates folded Tat precursor proteins before their translocation. In Xylella fastidiosa (strain Temecula1 / ATCC 700964), this protein is Sec-independent protein translocase protein TatB.